The sequence spans 480 residues: Probable histone deacetylase 1-A (480 aa).

The histone deacetylase stretch occupies residues 10-321; the sequence is KVCYYYDGDV…WTYETAVALD (312 aa). Residue histidine 141 is part of the active site. The interval 388–480 is disordered; that stretch reads SIHDDSGEED…KRVKEETKSV (93 aa). The segment covering 401 to 416 has biased composition (basic and acidic residues); that stretch reads PDKRISIRSSDKRIAC. Residues 417–427 show a composition bias toward acidic residues; it reads DEEFSDSEDEG. Basic and acidic residues predominate over residues 443-480; the sequence is VKTEEEKEGEDKKDVKEEEKAKDEKTDSKRVKEETKSV.

The protein belongs to the histone deacetylase family. HD type 1 subfamily. Part of a large multiprotein complex that also contains RBBP4. In terms of tissue distribution, oocyte.

Its subcellular location is the nucleus. It is found in the cytoplasm. The catalysed reaction is N(6)-acetyl-L-lysyl-[histone] + H2O = L-lysyl-[histone] + acetate. It carries out the reaction N(6)-acetyl-L-lysyl-[protein] + H2O = L-lysyl-[protein] + acetate. It catalyses the reaction N(6)-(2E)-butenoyl-L-lysyl-[protein] + H2O = (2E)-2-butenoate + L-lysyl-[protein]. Functionally, histone deacetylase that catalyzes the deacetylation of lysine residues on the N-terminal part of the core histones (H2A, H2B, H3 and H4). Histone deacetylation gives a tag for epigenetic repression and plays an important role in transcriptional regulation, cell cycle progression and developmental events. Histone deacetylases act via the formation of large multiprotein complexes. Also functions as deacetylase for non-histone proteins. In addition to protein deacetylase activity, also has protein-lysine deacylase activity: acts as a protein decrotonylase by mediating decrotonylation ((2E)-butenoyl) of histones. The sequence is that of Probable histone deacetylase 1-A (hdac1-a) from Xenopus laevis (African clawed frog).